The following is a 179-amino-acid chain: 3-hydroxyanthranilate 3,4-dioxygenase (179 aa).

Arginine 47 contacts O2. Positions 51, 57, and 96 each coordinate Fe cation. Glutamate 57 provides a ligand contact to substrate. 2 residues coordinate substrate: arginine 100 and glutamate 110. Fe cation contacts are provided by cysteine 125, cysteine 128, cysteine 162, and cysteine 165.

It belongs to the 3-HAO family. Requires Fe(2+) as cofactor.

It carries out the reaction 3-hydroxyanthranilate + O2 = (2Z,4Z)-2-amino-3-carboxymuconate 6-semialdehyde. Its pathway is cofactor biosynthesis; NAD(+) biosynthesis; quinolinate from L-kynurenine: step 3/3. Functionally, catalyzes the oxidative ring opening of 3-hydroxyanthranilate to 2-amino-3-carboxymuconate semialdehyde, which spontaneously cyclizes to quinolinate. The polypeptide is 3-hydroxyanthranilate 3,4-dioxygenase (Bacillus thuringiensis (strain Al Hakam)).